The sequence spans 311 residues: Probable manganese-dependent inorganic pyrophosphatase (311 aa).

The Mn(2+) site is built by H9, D13, D15, D77, H99, and D151.

It belongs to the PPase class C family. It depends on Mn(2+) as a cofactor.

It is found in the cytoplasm. The catalysed reaction is diphosphate + H2O = 2 phosphate + H(+). The chain is Probable manganese-dependent inorganic pyrophosphatase from Streptococcus suis (strain 98HAH33).